The primary structure comprises 461 residues: tRNA modification GTPase MnmE (461 aa).

Residues Arg-23, Glu-88, and Arg-127 each contribute to the (6S)-5-formyl-5,6,7,8-tetrahydrofolate site. One can recognise a TrmE-type G domain in the interval 223 to 383; it reads GLNTVIVGKP…LKECIKNLFF (161 aa). Asn-233 provides a ligand contact to K(+). GTP is bound by residues 233-238, 252-258, and 277-280; these read NVGKSS, TEIPGTT, and DTAG. Residue Ser-237 coordinates Mg(2+). Residues Thr-252, Ile-254, and Thr-257 each coordinate K(+). Thr-258 lines the Mg(2+) pocket. Residue Lys-461 coordinates (6S)-5-formyl-5,6,7,8-tetrahydrofolate.

This sequence belongs to the TRAFAC class TrmE-Era-EngA-EngB-Septin-like GTPase superfamily. TrmE GTPase family. As to quaternary structure, homodimer. Heterotetramer of two MnmE and two MnmG subunits. K(+) is required as a cofactor.

It localises to the cytoplasm. Its function is as follows. Exhibits a very high intrinsic GTPase hydrolysis rate. Involved in the addition of a carboxymethylaminomethyl (cmnm) group at the wobble position (U34) of certain tRNAs, forming tRNA-cmnm(5)s(2)U34. The polypeptide is tRNA modification GTPase MnmE (Clostridium botulinum (strain Langeland / NCTC 10281 / Type F)).